Here is a 338-residue protein sequence, read N- to C-terminus: Methionine import ATP-binding protein MetN 1 (338 aa).

Positions 2–241 (IELHQVSKSF…AKHATTKRFV (240 aa)) constitute an ABC transporter domain. 38–45 (GYSGAGKS) contributes to the ATP binding site.

This sequence belongs to the ABC transporter superfamily. Methionine importer (TC 3.A.1.24) family. In terms of assembly, the complex is composed of two ATP-binding proteins (MetN), two transmembrane proteins (MetI) and a solute-binding protein (MetQ).

The protein localises to the cell membrane. It catalyses the reaction L-methionine(out) + ATP + H2O = L-methionine(in) + ADP + phosphate + H(+). The catalysed reaction is D-methionine(out) + ATP + H2O = D-methionine(in) + ADP + phosphate + H(+). Part of the ABC transporter complex MetNIQ involved in methionine import. Responsible for energy coupling to the transport system. This chain is Methionine import ATP-binding protein MetN 1, found in Listeria innocua serovar 6a (strain ATCC BAA-680 / CLIP 11262).